A 773-amino-acid chain; its full sequence is ATP-dependent permease MDL2, mitochondrial (773 aa).

Residues 1 to 90 constitute a mitochondrion transit peptide; the sequence is MLNGRLPLLR…SPISKGSARS (90 aa). A compositionally biased stretch (polar residues) spans 73-84; the sequence is PETSLPSASPIS. A disordered region spans residues 73–95; it reads PETSLPSASPISKGSARSAHAKE. An ABC transmembrane type-1 domain is found at 119 to 413; sequence LLTAILLLTI…LSTFYSEIMQ (295 aa). Helical transmembrane passes span 123–143, 170–192, and 257–277; these read ILLL…IGIV, FLSF…FILL, and VVGV…LLFF. 481-488 is a binding site for ATP; sequence GPSGRGKS. Residues 493 to 733 form the ABC transporter domain; that stretch reads LLLRYYNPTT…DDNDNNHDND (241 aa). Composition is skewed to basic and acidic residues over residues 706-733 and 740-762; these read KEDL…HDND and ETKD…DAAK. Residues 706-773 are disordered; it reads KEDLNESKEH…ANPIKITPQP (68 aa).

Belongs to the ABC transporter superfamily. ABCB family. Mitochondrial peptide exporter (TC 3.A.1.212) subfamily.

It localises to the mitochondrion inner membrane. This is ATP-dependent permease MDL2, mitochondrial (MDL2) from Saccharomyces cerevisiae (strain ATCC 204508 / S288c) (Baker's yeast).